Consider the following 1009-residue polypeptide: Lateral signaling target protein 2 homolog (1009 aa).

Disordered regions lie at residues 313 to 460 (PVGS…EEQL), 497 to 629 (ASED…KRCS), and 777 to 905 (MQRN…TATA). 3 stretches are compositionally biased toward low complexity: residues 327 to 348 (SSTP…SSSG), 364 to 398 (QRNN…TPTA), and 406 to 427 (PSHS…HPPA). Positions 430 to 458 (SDGDDEDEDEEEDEEEDELEDTEDDTDEE) are enriched in acidic residues. At Ser-541 the chain carries Phosphoserine. Residues 544–558 (SEPHRDQGETIKSTE) show a composition bias toward basic and acidic residues. Over residues 562–575 (QQQQQQEQQTLQSS) the composition is skewed to low complexity. Composition is skewed to basic residues over residues 576–601 (RQRH…HHST) and 609–627 (QPHH…GRKR). Residues 780–798 (NNTIDNPSSSNTSSSSATT) show a composition bias toward low complexity. Residue Ser-807 is modified to Phosphoserine. Over residues 822–878 (VHQQEQEMQQQQDHQQQQHQHQVQVQLQRQRNNSVGSNTPSSASSTSSSSEQNSPVS) the composition is skewed to low complexity. The segment at 917–977 (DGKAPRCMSC…VCRDCYVREV (61 aa)) adopts an FYVE-type zinc-finger fold. Residues Cys-923, Cys-926, Cys-939, Cys-942, Cys-947, Cys-950, Cys-969, and Cys-972 each coordinate Zn(2+).

It belongs to the lst-2 family.

Negative regulator of epidermal growth factor receptor (EGFR) signaling. This chain is Lateral signaling target protein 2 homolog, found in Drosophila persimilis (Fruit fly).